The primary structure comprises 249 residues: UPF0524 protein C3orf70 homolog B (249 aa).

A disordered region spans residues 174-230 (GPKMGHCSSPSTSEDSGINALGGHFLESCEEESEEEDELSTDGHSSPGSLWDQDECT). Positions 201–213 (SCEEESEEEDELS) are enriched in acidic residues.

The protein belongs to the UPF0524 family.

Functionally, plays a role in neuronal and neurobehavioral development. Required for normal expression of the postmitotic and mature neuron markers elavl3 and eno2 and neurobehaviors related to circadian rhythm and altered light-dark conditions. This chain is UPF0524 protein C3orf70 homolog B, found in Danio rerio (Zebrafish).